A 129-amino-acid chain; its full sequence is Glycine cleavage system H protein (129 aa).

The 83-residue stretch at 24–106 folds into the Lipoyl-binding domain; sequence SYTVGISEHA…YGDGWFFRIM (83 aa). N6-lipoyllysine is present on Lys65.

Belongs to the GcvH family. In terms of assembly, the glycine cleavage system is composed of four proteins: P, T, L and H. The cofactor is (R)-lipoate.

Its function is as follows. The glycine cleavage system catalyzes the degradation of glycine. The H protein shuttles the methylamine group of glycine from the P protein to the T protein. The protein is Glycine cleavage system H protein of Shewanella loihica (strain ATCC BAA-1088 / PV-4).